Consider the following 332-residue polypeptide: Malate dehydrogenase (332 aa).

Position 15 to 21 (15 to 21 (GAAGHIG)) interacts with NAD(+). Substrate contacts are provided by R96 and R102. NAD(+) is bound by residues N109 and 133–135 (VGN). Residues N135 and R166 each contribute to the substrate site. The Proton acceptor role is filled by H191.

It belongs to the LDH/MDH superfamily. MDH type 2 family.

It catalyses the reaction (S)-malate + NAD(+) = oxaloacetate + NADH + H(+). In terms of biological role, catalyzes the reversible oxidation of malate to oxaloacetate. This Mycolicibacterium vanbaalenii (strain DSM 7251 / JCM 13017 / BCRC 16820 / KCTC 9966 / NRRL B-24157 / PYR-1) (Mycobacterium vanbaalenii) protein is Malate dehydrogenase.